A 78-amino-acid polypeptide reads, in one-letter code: Small ribosomal subunit protein bS18 (78 aa).

It belongs to the bacterial ribosomal protein bS18 family. In terms of assembly, part of the 30S ribosomal subunit. Forms a tight heterodimer with protein bS6.

In terms of biological role, binds as a heterodimer with protein bS6 to the central domain of the 16S rRNA, where it helps stabilize the platform of the 30S subunit. The chain is Small ribosomal subunit protein bS18 from Lactobacillus delbrueckii subsp. bulgaricus (strain ATCC 11842 / DSM 20081 / BCRC 10696 / JCM 1002 / NBRC 13953 / NCIMB 11778 / NCTC 12712 / WDCM 00102 / Lb 14).